A 500-amino-acid polypeptide reads, in one-letter code: L-arabinose isomerase (500 aa).

Residues glutamate 306, glutamate 333, histidine 349, and histidine 448 each coordinate Mn(2+).

The protein belongs to the arabinose isomerase family. Mn(2+) serves as cofactor.

The enzyme catalyses beta-L-arabinopyranose = L-ribulose. The protein operates within carbohydrate degradation; L-arabinose degradation via L-ribulose; D-xylulose 5-phosphate from L-arabinose (bacterial route): step 1/3. Its function is as follows. Catalyzes the conversion of L-arabinose to L-ribulose. This chain is L-arabinose isomerase, found in Saccharophagus degradans (strain 2-40 / ATCC 43961 / DSM 17024).